The primary structure comprises 189 residues: Large ribosomal subunit protein bL12c (189 aa).

Disordered regions lie at residues 1–30 (MAAT…HPQP) and 165–189 (EGVS…VSIV). Residues 1–56 (MAATTTMATLNLPSLTSHPNSSTFPKHPQPLQFPFRTTTNPISLSSTRTTRLRPIA) constitute a chloroplast transit peptide. Residues 11 to 24 (NLPSLTSHPNSSTF) are compositionally biased toward polar residues. Residues 165–183 (EGVSKDDAEDAKKQLEDAG) show a composition bias toward basic and acidic residues.

Component of the chloroplast large ribosomal subunit (LSU). Mature 70S chloroplast ribosomes of higher plants consist of a small (30S) and a large (50S) subunit. The 30S small subunit contains 1 molecule of ribosomal RNA (16S rRNA) and 24 different proteins. The 50S large subunit contains 3 rRNA molecules (23S, 5S and 4.5S rRNA) and 33 different proteins.

The protein localises to the plastid. The protein resides in the chloroplast. In terms of biological role, component of the chloroplast ribosome (chloro-ribosome), a dedicated translation machinery responsible for the synthesis of chloroplast genome-encoded proteins, including proteins of the transcription and translation machinery and components of the photosynthetic apparatus. In Spinacia oleracea (Spinach), this protein is Large ribosomal subunit protein bL12c (RPL12).